Consider the following 636-residue polypeptide: Plasma kallikrein (636 aa).

The signal sequence occupies residues 1–19; that stretch reads MIALRQAAYFICLFATVSC. 4 consecutive Apple domains span residues 21–104, 111–194, 201–284, and 294–377; these read CLTQ…LKRC, CHRS…LKAC, CRVD…LLTC, and CHSK…LRLC. Disulfide bonds link C21–C104, C47–C77, C51–C57, C111–C194, C137–C166, C141–C147, C201–C284, C227–C256, C231–C237, C294–C377, C320–C349, and C324–C330. N66 and N127 each carry an N-linked (GlcNAc...) asparagine glycan. Residues N361 and N397 are each glycosylated (N-linked (GlcNAc...) asparagine). In terms of domain architecture, Peptidase S1 spans 392–627; sequence IVGGTNASWG…YVDWILEKTQ (236 aa). C420 and C436 are disulfide-bonded. The active-site Charge relay system is H435. N-linked (GlcNAc...) asparagine glycosylation is present at N454. Catalysis depends on D484, which acts as the Charge relay system. N495 carries N-linked (GlcNAc...) asparagine glycosylation. 3 disulfides stabilise this stretch: C518/C585, C549/C564, and C575/C603. Residue S579 is the Charge relay system of the active site.

Belongs to the peptidase S1 family. Plasma kallikrein subfamily. In terms of assembly, forms a heterodimer with SERPINA5. The zymogen is activated by factor XIIa, which cleaves the molecule into a light chain, which contains the active site, and a heavy chain, which associates with HMW kininogen. These chains are linked by one or more disulfide bonds.

It localises to the secreted. The catalysed reaction is Cleaves selectively Arg-|-Xaa and Lys-|-Xaa bonds, including Lys-|-Arg and Arg-|-Ser bonds in (human) kininogen to release bradykinin.. Its activity is regulated as follows. Inhibited by SERPINA5. Functionally, the enzyme cleaves Lys-Arg and Arg-Ser bonds. It activates, in a reciprocal reaction, factor XII after its binding to a negatively charged surface. It also releases bradykinin from HMW kininogen and may also play a role in the renin-angiotensin system by converting prorenin into renin. This is Plasma kallikrein (KLKB1) from Bos taurus (Bovine).